The following is a 150-amino-acid chain: 3-hydroxyacyl-[acyl-carrier-protein] dehydratase FabZ (150 aa).

Histidine 56 is a catalytic residue.

Belongs to the thioester dehydratase family. FabZ subfamily.

It localises to the cytoplasm. The enzyme catalyses a (3R)-hydroxyacyl-[ACP] = a (2E)-enoyl-[ACP] + H2O. Involved in unsaturated fatty acids biosynthesis. Catalyzes the dehydration of short chain beta-hydroxyacyl-ACPs and long chain saturated and unsaturated beta-hydroxyacyl-ACPs. This Desulfotalea psychrophila (strain LSv54 / DSM 12343) protein is 3-hydroxyacyl-[acyl-carrier-protein] dehydratase FabZ.